The chain runs to 336 residues: Large ribosomal subunit protein uL3 (336 aa).

Disordered regions lie at residues 1-43, 205-230, and 311-336; these read MPQP…QGFA, ITKG…HARQ, and RPAV…SNQG. Positions 219–230 are enriched in basic residues; the sequence is GVQKRKGKHARQ.

Belongs to the universal ribosomal protein uL3 family. Part of the 50S ribosomal subunit. Forms a cluster with proteins L14 and L24e.

Functionally, one of the primary rRNA binding proteins, it binds directly near the 3'-end of the 23S rRNA, where it nucleates assembly of the 50S subunit. The sequence is that of Large ribosomal subunit protein uL3 from Natronomonas pharaonis (strain ATCC 35678 / DSM 2160 / CIP 103997 / JCM 8858 / NBRC 14720 / NCIMB 2260 / Gabara) (Halobacterium pharaonis).